A 194-amino-acid polypeptide reads, in one-letter code: GTP cyclohydrolase 1 (194 aa).

Residues C83, H86, and C155 each coordinate Zn(2+).

This sequence belongs to the GTP cyclohydrolase I family. Toroid-shaped homodecamer, composed of two pentamers of five dimers.

The catalysed reaction is GTP + H2O = 7,8-dihydroneopterin 3'-triphosphate + formate + H(+). The protein operates within cofactor biosynthesis; 7,8-dihydroneopterin triphosphate biosynthesis; 7,8-dihydroneopterin triphosphate from GTP: step 1/1. The polypeptide is GTP cyclohydrolase 1 (Streptococcus pyogenes serotype M3 (strain ATCC BAA-595 / MGAS315)).